The primary structure comprises 146 residues: Cytochrome c oxidase subunit 5A, mitochondrial (146 aa).

A mitochondrion-targeting transit peptide spans 1–37; that stretch reads MLAAALRRCTAAAAARGLLHPASAPSPAAAVCSIRCY. Positions 2 to 16 match the SIFI-degron motif; that stretch reads LAAALRRCTAAAAAR. 2 positions are modified to N6-acetyllysine: K83 and K109. Residue T137 is modified to Phosphothreonine.

This sequence belongs to the cytochrome c oxidase subunit 5A family. As to quaternary structure, component of the cytochrome c oxidase (complex IV, CIV), a multisubunit enzyme composed of 14 subunits. The complex is composed of a catalytic core of 3 subunits MT-CO1, MT-CO2 and MT-CO3, encoded in the mitochondrial DNA, and 11 supernumerary subunits COX4I, COX5A, COX5B, COX6A, COX6B, COX6C, COX7A, COX7B, COX7C, COX8 and NDUFA4, which are encoded in the nuclear genome. The complex exists as a monomer or a dimer and forms supercomplexes (SCs) in the inner mitochondrial membrane with NADH-ubiquinone oxidoreductase (complex I, CI) and ubiquinol-cytochrome c oxidoreductase (cytochrome b-c1 complex, complex III, CIII), resulting in different assemblies (supercomplex SCI(1)III(2)IV(1) and megacomplex MCI(2)III(2)IV(2)). Interacts with AFG1L. Interacts with RAB5IF. In terms of processing, in response to mitochondrial stress, the precursor protein is ubiquitinated by the SIFI complex in the cytoplasm before mitochondrial import, leading to its degradation. Within the SIFI complex, UBR4 initiates ubiquitin chain that are further elongated or branched by KCMF1.

The protein localises to the mitochondrion inner membrane. It functions in the pathway energy metabolism; oxidative phosphorylation. Component of the cytochrome c oxidase, the last enzyme in the mitochondrial electron transport chain which drives oxidative phosphorylation. The respiratory chain contains 3 multisubunit complexes succinate dehydrogenase (complex II, CII), ubiquinol-cytochrome c oxidoreductase (cytochrome b-c1 complex, complex III, CIII) and cytochrome c oxidase (complex IV, CIV), that cooperate to transfer electrons derived from NADH and succinate to molecular oxygen, creating an electrochemical gradient over the inner membrane that drives transmembrane transport and the ATP synthase. Cytochrome c oxidase is the component of the respiratory chain that catalyzes the reduction of oxygen to water. Electrons originating from reduced cytochrome c in the intermembrane space (IMS) are transferred via the dinuclear copper A center (CU(A)) of subunit 2 and heme A of subunit 1 to the active site in subunit 1, a binuclear center (BNC) formed by heme A3 and copper B (CU(B)). The BNC reduces molecular oxygen to 2 water molecules using 4 electrons from cytochrome c in the IMS and 4 protons from the mitochondrial matrix. In Mus musculus (Mouse), this protein is Cytochrome c oxidase subunit 5A, mitochondrial (Cox5a).